The primary structure comprises 314 residues: uncharacterized protein (314 aa).

A signal peptide spans 1 to 20 (MKKRAGIWAALLLAAVMLAG). Cysteine 21 is lipidated: N-palmitoyl cysteine. A lipid anchor (S-diacylglycerol cysteine) is attached at cysteine 21. The Fe/B12 periplasmic-binding domain maps to 59-311 (KIVSLMPSNT…ELAESIYPDT (253 aa)).

This sequence belongs to the bacterial solute-binding protein 8 family. The complex is composed of two ATP-binding proteins (YvrA), two transmembrane proteins (YvrB) and a solute-binding protein (YvrC).

It is found in the cell membrane. Functionally, probably part of an ABC transporter complex. This is an uncharacterized protein from Bacillus subtilis (strain 168).